Consider the following 320-residue polypeptide: HPr kinase/phosphorylase (320 aa).

Residues H139 and K160 contribute to the active site. 154 to 161 (GDSGVGKS) lines the ATP pocket. S161 provides a ligand contact to Mg(2+). The active-site Proton acceptor; for phosphorylation activity. Proton donor; for dephosphorylation activity is the D178. An important for the catalytic mechanism of both phosphorylation and dephosphorylation region spans residues 202 to 211 (MEIRGIGIID). Residue E203 participates in Mg(2+) binding. The active site involves R244. The tract at residues 265-270 (PVKTGR) is important for the catalytic mechanism of dephosphorylation.

The protein belongs to the HPrK/P family. As to quaternary structure, homohexamer. It depends on Mg(2+) as a cofactor.

The enzyme catalyses [HPr protein]-L-serine + ATP = [HPr protein]-O-phospho-L-serine + ADP + H(+). It catalyses the reaction [HPr protein]-O-phospho-L-serine + phosphate + H(+) = [HPr protein]-L-serine + diphosphate. Catalyzes the ATP- as well as the pyrophosphate-dependent phosphorylation of a specific serine residue in HPr, a phosphocarrier protein of the phosphoenolpyruvate-dependent sugar phosphotransferase system (PTS). HprK/P also catalyzes the pyrophosphate-producing, inorganic phosphate-dependent dephosphorylation (phosphorolysis) of seryl-phosphorylated HPr (P-Ser-HPr). The two antagonistic activities of HprK/P are regulated by several intracellular metabolites, which change their concentration in response to the absence or presence of rapidly metabolisable carbon sources (glucose, fructose, etc.) in the growth medium. Therefore, by controlling the phosphorylation state of HPr, HPrK/P is a sensor enzyme that plays a major role in the regulation of carbon metabolism and sugar transport: it mediates carbon catabolite repression (CCR), and regulates PTS-catalyzed carbohydrate uptake and inducer exclusion. The protein is HPr kinase/phosphorylase of Limosilactobacillus reuteri (strain DSM 20016) (Lactobacillus reuteri).